Reading from the N-terminus, the 218-residue chain is Cytochrome b6 (218 aa).

A helical transmembrane segment spans residues 35–55 (IFYCLGGITLVCFLIQFATGF). Position 38 (C38) interacts with heme c. H89 and H103 together coordinate heme b. A run of 3 helical transmembrane segments spans residues 93-113 (ASMM…TGGF), 119-139 (LTWV…VTGY), and 189-209 (LHTF…FLMI). Residues H190 and H205 each contribute to the heme b site.

The protein belongs to the cytochrome b family. PetB subfamily. As to quaternary structure, the 4 large subunits of the cytochrome b6-f complex are cytochrome b6, subunit IV (17 kDa polypeptide, PetD), cytochrome f and the Rieske protein, while the 4 small subunits are PetG, PetL, PetM and PetN. The complex functions as a dimer. Heme b is required as a cofactor. Requires heme c as cofactor.

It localises to the cellular thylakoid membrane. Component of the cytochrome b6-f complex, which mediates electron transfer between photosystem II (PSII) and photosystem I (PSI), cyclic electron flow around PSI, and state transitions. In Synechococcus sp. (strain RCC307), this protein is Cytochrome b6.